The primary structure comprises 384 residues: Acetylgalactosaminyl-O-glycosyl-glycoprotein beta-1,3-N-acetylglucosaminyltransferase (384 aa).

The Cytoplasmic portion of the chain corresponds to 1-12; it reads MAFPCRRSLTAK. A helical; Signal-anchor for type II membrane protein membrane pass occupies residues 13–31; sequence TLACLLVGVSFLALQQWFL. Residues 32 to 384 lie on the Lumenal side of the membrane; that stretch reads QAPRSPREER…LSCDRGHRVS (353 aa). The tract at residues 34–68 is disordered; it reads PRSPREERSPQEETPEGPTDAPAADEPPSELVPGP. 3 N-linked (GlcNAc...) asparagine glycosylation sites follow: N73, N77, and N196.

Belongs to the glycosyltransferase 31 family. Present in stomach and colon (at protein level). Restricted in the stomach, colon and small intestine, where core 3 structure is present.

Its subcellular location is the golgi apparatus membrane. It carries out the reaction a 3-O-[N-acetyl-alpha-D-galactosaminyl]-L-threonyl-[protein] + UDP-N-acetyl-alpha-D-glucosamine = a 3-O-[N-acetyl-beta-D-glucosaminyl-(1-&gt;3)-N-acetyl-alpha-D-galactosaminyl]-L-threonyl-[protein] + UDP + H(+). It catalyses the reaction a 3-O-[N-acetyl-alpha-D-galactosaminyl]-L-seryl-[protein] + UDP-N-acetyl-alpha-D-glucosamine = 3-O-[N-acetyl-beta-D-glucosaminyl-(1-&gt;3)-N-acetyl-alpha-D-galactosaminyl]-L-seryl-[protein] + UDP + H(+). The protein operates within protein modification; protein glycosylation. In terms of biological role, beta-1,3-N-acetylglucosaminyltransferase that synthesizes the core 3 structure of the O-glycan, an important precursor in the biosynthesis of mucin-type glycoproteins. Plays an important role in the synthesis of mucin-type O-glycans in digestive organs. This chain is Acetylgalactosaminyl-O-glycosyl-glycoprotein beta-1,3-N-acetylglucosaminyltransferase (B3GNT6), found in Homo sapiens (Human).